Consider the following 320-residue polypeptide: Annexin A5 (320 aa).

A2 is modified (N-acetylalanine). Annexin repeat units follow at residues F15–K86, P87–Q158, A170–K242, and S246–G317. Residue K29 forms a Glycyl lysine isopeptide (Lys-Gly) (interchain with G-Cter in SUMO1); alternate linkage. K29 participates in a covalent cross-link: Glycyl lysine isopeptide (Lys-Gly) (interchain with G-Cter in SUMO2); alternate. A Phosphoserine modification is found at S37. 5 positions are modified to N6-acetyllysine: K70, K76, K79, K97, and K101. K290 is subject to N6-succinyllysine. The [IL]-x-C-x-x-[DE] motif signature appears at L314–D319.

Belongs to the annexin family. As to quaternary structure, monomer. Binds ATRX and EIF5B. Interacts with hepatitis B virus (HBV). Post-translationally, S-nitrosylation is induced by interferon-gamma and oxidatively-modified low-densitity lipoprotein (LDL(ox)) possibly implicating the iNOS-S100A8/9 transnitrosylase complex.

Its function is as follows. This protein is an anticoagulant protein that acts as an indirect inhibitor of the thromboplastin-specific complex, which is involved in the blood coagulation cascade. The sequence is that of Annexin A5 (ANXA5) from Homo sapiens (Human).